We begin with the raw amino-acid sequence, 179 residues long: Large ribosomal subunit protein uL5 (179 aa).

The protein belongs to the universal ribosomal protein uL5 family. Part of the 50S ribosomal subunit; part of the 5S rRNA/L5/L18/L25 subcomplex. Contacts the 5S rRNA and the P site tRNA. Forms a bridge to the 30S subunit in the 70S ribosome.

Its function is as follows. This is one of the proteins that bind and probably mediate the attachment of the 5S RNA into the large ribosomal subunit, where it forms part of the central protuberance. In the 70S ribosome it contacts protein S13 of the 30S subunit (bridge B1b), connecting the 2 subunits; this bridge is implicated in subunit movement. Contacts the P site tRNA; the 5S rRNA and some of its associated proteins might help stabilize positioning of ribosome-bound tRNAs. The sequence is that of Large ribosomal subunit protein uL5 from Alkalilimnicola ehrlichii (strain ATCC BAA-1101 / DSM 17681 / MLHE-1).